Reading from the N-terminus, the 143-residue chain is Photosystem I reaction center subunit IV B, chloroplastic (143 aa).

A chloroplast-targeting transit peptide spans 1 to 51 (MASSSMASAASGFMVATPNIATSNTAPRTSMLFFSSSKNNTTTNFPRLVVR). Residues 56–75 (AAPPAATATAEGEAPPAKAA) are compositionally biased toward low complexity. Positions 56-86 (AAPPAATATAEGEAPPAKAAKPPPIGPKRGT) are disordered.

This sequence belongs to the PsaE family. In terms of processing, 2 isoforms exists (ratio 1:1). With or without the N-terminal alanine.

Its subcellular location is the plastid. The protein localises to the chloroplast thylakoid membrane. Stabilizes the interaction between PsaC and the PSI core, assists the docking of the ferredoxin to PSI and interacts with ferredoxin-NADP oxidoreductase. This Nicotiana sylvestris (Wood tobacco) protein is Photosystem I reaction center subunit IV B, chloroplastic (PSAEB).